Here is a 129-residue protein sequence, read N- to C-terminus: Histone H3 (129 aa).

Residues 1–36 form a disordered region; sequence MSRTKETARAKRTITSKKSKKAPSGASGVKRSHRRW. The span at 10–21 shows a compositional bias: basic residues; sequence AKRTITSKKSKK.

It belongs to the histone H3 family. The nucleosome is a histone octamer containing two molecules each of H2A, H2B, H3 and H4 assembled in one H3-H4 heterotetramer and two H2A-H2B heterodimers. The octamer wraps approximately 147 bp of DNA.

It is found in the nucleus. The protein localises to the chromosome. In terms of biological role, core component of nucleosome. Nucleosomes wrap and compact DNA into chromatin, limiting DNA accessibility to the cellular machineries which require DNA as a template. Histones thereby play a central role in transcription regulation, DNA repair, DNA replication and chromosomal stability. DNA accessibility is regulated via a complex set of post-translational modifications of histones, also called histone code, and nucleosome remodeling. This Leishmania infantum protein is Histone H3.